A 721-amino-acid polypeptide reads, in one-letter code: Fatty acid oxidation complex subunit alpha (721 aa).

Residues 1–190 form an enoyl-CoA hydratase/isomerase region; sequence MIYEGKAITV…KVGAVDAVVA (190 aa). Aspartate 297 lines the substrate pocket. The tract at residues 312-721 is 3-hydroxyacyl-CoA dehydrogenase; it reads KDVKQAAVLG…SFFGQASSEE (410 aa). NAD(+) contacts are provided by residues methionine 325, aspartate 344, 401–403, lysine 408, and serine 430; that span reads VVE. The For 3-hydroxyacyl-CoA dehydrogenase activity role is filled by histidine 451. Asparagine 454 lines the NAD(+) pocket. Substrate-binding residues include asparagine 501 and tyrosine 660.

It in the N-terminal section; belongs to the enoyl-CoA hydratase/isomerase family. The protein in the C-terminal section; belongs to the 3-hydroxyacyl-CoA dehydrogenase family. Heterotetramer of two alpha chains (FadB) and two beta chains (FadA).

It catalyses the reaction a (3S)-3-hydroxyacyl-CoA + NAD(+) = a 3-oxoacyl-CoA + NADH + H(+). It carries out the reaction a (3S)-3-hydroxyacyl-CoA = a (2E)-enoyl-CoA + H2O. The enzyme catalyses a 4-saturated-(3S)-3-hydroxyacyl-CoA = a (3E)-enoyl-CoA + H2O. The catalysed reaction is (3S)-3-hydroxybutanoyl-CoA = (3R)-3-hydroxybutanoyl-CoA. It catalyses the reaction a (3Z)-enoyl-CoA = a 4-saturated (2E)-enoyl-CoA. It carries out the reaction a (3E)-enoyl-CoA = a 4-saturated (2E)-enoyl-CoA. The protein operates within lipid metabolism; fatty acid beta-oxidation. Functionally, involved in the aerobic and anaerobic degradation of long-chain fatty acids via beta-oxidation cycle. Catalyzes the formation of 3-oxoacyl-CoA from enoyl-CoA via L-3-hydroxyacyl-CoA. It can also use D-3-hydroxyacyl-CoA and cis-3-enoyl-CoA as substrate. The polypeptide is Fatty acid oxidation complex subunit alpha (Pseudomonas savastanoi pv. phaseolicola (strain 1448A / Race 6) (Pseudomonas syringae pv. phaseolicola (strain 1448A / Race 6))).